We begin with the raw amino-acid sequence, 158 residues long: NAD(P)H-quinone oxidoreductase subunit J, chloroplastic (158 aa).

It belongs to the complex I 30 kDa subunit family. In terms of assembly, NDH is composed of at least 16 different subunits, 5 of which are encoded in the nucleus.

The protein localises to the plastid. Its subcellular location is the chloroplast thylakoid membrane. It carries out the reaction a plastoquinone + NADH + (n+1) H(+)(in) = a plastoquinol + NAD(+) + n H(+)(out). The enzyme catalyses a plastoquinone + NADPH + (n+1) H(+)(in) = a plastoquinol + NADP(+) + n H(+)(out). Functionally, NDH shuttles electrons from NAD(P)H:plastoquinone, via FMN and iron-sulfur (Fe-S) centers, to quinones in the photosynthetic chain and possibly in a chloroplast respiratory chain. The immediate electron acceptor for the enzyme in this species is believed to be plastoquinone. Couples the redox reaction to proton translocation, and thus conserves the redox energy in a proton gradient. This chain is NAD(P)H-quinone oxidoreductase subunit J, chloroplastic, found in Nymphaea alba (White water-lily).